We begin with the raw amino-acid sequence, 354 residues long: S-adenosylmethionine:tRNA ribosyltransferase-isomerase (354 aa).

Belongs to the QueA family. Monomer.

Its subcellular location is the cytoplasm. It carries out the reaction 7-aminomethyl-7-carbaguanosine(34) in tRNA + S-adenosyl-L-methionine = epoxyqueuosine(34) in tRNA + adenine + L-methionine + 2 H(+). It functions in the pathway tRNA modification; tRNA-queuosine biosynthesis. In terms of biological role, transfers and isomerizes the ribose moiety from AdoMet to the 7-aminomethyl group of 7-deazaguanine (preQ1-tRNA) to give epoxyqueuosine (oQ-tRNA). This is S-adenosylmethionine:tRNA ribosyltransferase-isomerase from Pseudomonas syringae pv. syringae (strain B728a).